Consider the following 340-residue polypeptide: Ketol-acid reductoisomerase (NADP(+)) (340 aa).

Positions 3 to 182 (VQMEYEKDVK…GAARVGLLET (180 aa)) constitute a KARI N-terminal Rossmann domain. NADP(+) is bound by residues 26–29 (YGSQ), R49, S53, and 83–86 (DEIQ). Residue H108 is part of the active site. G134 is an NADP(+) binding site. The 146-residue stretch at 183–328 (TYKEETEEDL…AELRKAMPFV (146 aa)) folds into the KARI C-terminal knotted domain. Mg(2+) is bound by residues D191, E195, E227, and E231. Residue S252 coordinates substrate.

It belongs to the ketol-acid reductoisomerase family. It depends on Mg(2+) as a cofactor.

It catalyses the reaction (2R)-2,3-dihydroxy-3-methylbutanoate + NADP(+) = (2S)-2-acetolactate + NADPH + H(+). The catalysed reaction is (2R,3R)-2,3-dihydroxy-3-methylpentanoate + NADP(+) = (S)-2-ethyl-2-hydroxy-3-oxobutanoate + NADPH + H(+). It participates in amino-acid biosynthesis; L-isoleucine biosynthesis; L-isoleucine from 2-oxobutanoate: step 2/4. The protein operates within amino-acid biosynthesis; L-valine biosynthesis; L-valine from pyruvate: step 2/4. Functionally, involved in the biosynthesis of branched-chain amino acids (BCAA). Catalyzes an alkyl-migration followed by a ketol-acid reduction of (S)-2-acetolactate (S2AL) to yield (R)-2,3-dihydroxy-isovalerate. In the isomerase reaction, S2AL is rearranged via a Mg-dependent methyl migration to produce 3-hydroxy-3-methyl-2-ketobutyrate (HMKB). In the reductase reaction, this 2-ketoacid undergoes a metal-dependent reduction by NADPH to yield (R)-2,3-dihydroxy-isovalerate. The protein is Ketol-acid reductoisomerase (NADP(+)) of Streptococcus pneumoniae (strain Hungary19A-6).